A 265-amino-acid chain; its full sequence is UPF0294 protein KPK_4510 (265 aa).

This sequence belongs to the UPF0294 family.

It localises to the cytoplasm. The polypeptide is UPF0294 protein KPK_4510 (Klebsiella pneumoniae (strain 342)).